The primary structure comprises 164 residues: Peptidyl-prolyl cis-trans isomerase A-like 4G (164 aa).

Residues 7–163 (FFDITVDGKP…KKITIADCGQ (157 aa)) form the PPIase cyclophilin-type domain.

This sequence belongs to the cyclophilin-type PPIase family. PPIase A subfamily.

It localises to the cytoplasm. It catalyses the reaction [protein]-peptidylproline (omega=180) = [protein]-peptidylproline (omega=0). Its function is as follows. PPIases accelerate the folding of proteins. It catalyzes the cis-trans isomerization of proline imidic peptide bonds in oligopeptides. This Homo sapiens (Human) protein is Peptidyl-prolyl cis-trans isomerase A-like 4G (PPIAL4G).